Consider the following 241-residue polypeptide: MPINRPNLNLHIPPLNIVAAYDGAEIPSTNKHLKNNFNSLHNQMRKMPLSHFKEALDVPDYSGMRQSGFFAMSQGFQLNNHGYDVFIHARRESPQSLGKFAGDKFHISVLRDMVPQAFQALSGLLFSEDSPVDKWKVTDMEKVVQQARVSLGAQFTLYIKPDQENSQYSASFLHKTRQFIECLESRLSENGVISGQCPESDVHPENWKYLSYRNELRSGRDGGEMQRQALREEPFYRLMTE.

The active-site Proton donor is the H106. The active-site Proton acceptor is K136.

This sequence belongs to the phosphothreonine lyase family.

The protein resides in the secreted. In terms of biological role, secreted effector that irreversibly inactivates host MAP kinases by catalyzing the dephosphorylation of the phosphothreonine residue in the pT-X-pY motif present in MAPKs, via a beta-elimination reaction leading to a dehydrobutyrine residue. The polypeptide is MAPK phosphothreonine lyase (spvC) (Salmonella choleraesuis (strain SC-B67)).